Consider the following 67-residue polypeptide: Large ribosomal subunit protein bL35 (67 aa).

Basic residues predominate over residues 1 to 32 (MPKLKNHSGAKKRFAKTATGKYKRRKAGRKHL). Residues 1-54 (MPKLKNHSGAKKRFAKTATGKYKRRKAGRKHLLTPQSGSRKREMRQTGIIKPES) form a disordered region.

It belongs to the bacterial ribosomal protein bL35 family.

The protein is Large ribosomal subunit protein bL35 of Elusimicrobium minutum (strain Pei191).